A 438-amino-acid polypeptide reads, in one-letter code: NADH-quinone oxidoreductase subunit D (438 aa).

Belongs to the complex I 49 kDa subunit family. As to quaternary structure, NDH-1 is composed of 14 different subunits. Subunits NuoB, C, D, E, F, and G constitute the peripheral sector of the complex.

The protein localises to the cell membrane. It carries out the reaction a quinone + NADH + 5 H(+)(in) = a quinol + NAD(+) + 4 H(+)(out). NDH-1 shuttles electrons from NADH, via FMN and iron-sulfur (Fe-S) centers, to quinones in the respiratory chain. The immediate electron acceptor for the enzyme in this species is believed to be a menaquinone. Couples the redox reaction to proton translocation (for every two electrons transferred, four hydrogen ions are translocated across the cytoplasmic membrane), and thus conserves the redox energy in a proton gradient. This Rhodococcus jostii (strain RHA1) protein is NADH-quinone oxidoreductase subunit D.